The sequence spans 393 residues: Phosphoglycerate kinase (393 aa).

Residues 21–23 (DIN), R36, 59–62 (HFGR), R114, and R147 contribute to the substrate site. Residues K197, E319, and 349 to 352 (GGDT) contribute to the ATP site.

The protein belongs to the phosphoglycerate kinase family. As to quaternary structure, monomer.

The protein resides in the cytoplasm. The catalysed reaction is (2R)-3-phosphoglycerate + ATP = (2R)-3-phospho-glyceroyl phosphate + ADP. The protein operates within carbohydrate degradation; glycolysis; pyruvate from D-glyceraldehyde 3-phosphate: step 2/5. The protein is Phosphoglycerate kinase of Dinoroseobacter shibae (strain DSM 16493 / NCIMB 14021 / DFL 12).